The following is a 153-amino-acid chain: MNVGVAHSEVNPNTRVMNSRGMWLTYALGVGLLHIVLLSIPFFSVPVAWTLTNVIHNLGMYVFLHAVKGTPFETPDQGKARLLTHWEQLDYGVQFTSSRKFFTISPIILYFLASFYTKYDTTHFILNTASLLSVLIPKMPQLHGVRIFGINKY.

Topologically, residues 1 to 26 are cytoplasmic; that stretch reads MNVGVAHSEVNPNTRVMNSRGMWLTY. 2 helical membrane passes run 27–46 and 47–64; these read ALGVGLLHIVLLSIPFFSVP and VAWTLTNVIHNLGMYVFL. Over 65 to 100 the chain is Cytoplasmic; sequence HAVKGTPFETPDQGKARLLTHWEQLDYGVQFTSSRK. Residues 101–121 traverse the membrane as a helical segment; the sequence is FFTISPIILYFLASFYTKYDT. The Extracellular segment spans residues 122–123; sequence TH. The helical transmembrane segment at 124–140 threads the bilayer; the sequence is FILNTASLLSVLIPKMP. Residues 141–153 are Cytoplasmic-facing; that stretch reads QLHGVRIFGINKY.

The protein belongs to the ORM family. Ceramide-sensitive subunit of the serine palmitoyltransferase (SPT) complex, which is also composed of SPTLC1, SPTLC2/3 and SPTSSA/B.

The protein localises to the endoplasmic reticulum membrane. In terms of biological role, plays an essential role in the homeostatic regulation of sphingolipid de novo biosynthesis by modulating the activity of the serine palmitoyltransferase (SPT) in response to ceramide levels. When complexed to SPT, the binding of ceramides to its N-terminus stabilizes a conformation that block SPT substrate entry, hence preventing SPT catalytic activity. Through this mechanism, maintains ceramide levels at sufficient concentrations for the production of complex sphingolipids, but which prevents the accumulation of ceramides to levels that trigger apoptosis. This chain is ORM1-like protein 1 (ORMDL1), found in Bos taurus (Bovine).